A 428-amino-acid polypeptide reads, in one-letter code: Histone-lysine N-methyltransferase SMYD3 (428 aa).

M1 carries the N-acetylmethionine modification. The SET domain maps to 4–240 (LKVEKFATAK…VGEELTICYL (237 aa)). Residue 14 to 16 (RGN) participates in S-adenosyl-L-methionine binding. Position 22 is a phosphothreonine (T22). Zn(2+)-binding residues include C49, C52, C62, C65, C71, C75, H83, and C87. An MYND-type zinc finger spans residues 49–87 (CDRCLLGKEKLMRCSQCRVAKYCSAKCQKKAWPDHKREC). Residues Y124, N132, N181, 205–206 (NH), Y239, and F259 contribute to the S-adenosyl-L-methionine site. The interval 272-428 (DADMLTGDEQ…EECDANIRAS (157 aa)) is C-terminal domain; essential for histone methyltransferase activity, nuclear localization and mediates interaction with HSP90AA1.

Belongs to the class V-like SAM-binding methyltransferase superfamily. Histone-lysine methyltransferase family. Interacts with HSPCA. Interacts with HELZ. Interacts with POLR2A; the interaction may be indirect and may be mediated by HELZ. Interacts with HSP90AA1; this interaction enhances SMYD3 histone-lysine N-methyltransferase. As to expression, expressed in skeletal muscles and testis. Overexpressed in a majority of colorectal and hepatocellular carcinomas.

The protein localises to the cytoplasm. Its subcellular location is the nucleus. It catalyses the reaction L-lysyl(4)-[histone H3] + 3 S-adenosyl-L-methionine = N(6),N(6),N(6)-trimethyl-L-lysyl(4)-[histone H3] + 3 S-adenosyl-L-homocysteine + 3 H(+). With respect to regulation, histone methyltransferase activity strongly stimulated by HSPCA. Its function is as follows. Histone methyltransferase. Specifically methylates 'Lys-4' of histone H3, inducing di- and tri-methylation, but not monomethylation. Also methylates 'Lys-5' of histone H4. Plays an important role in transcriptional activation as a member of an RNA polymerase complex. Binds DNA containing 5'-CCCTCC-3' or 5'-GAGGGG-3' sequences. This chain is Histone-lysine N-methyltransferase SMYD3 (SMYD3), found in Homo sapiens (Human).